Reading from the N-terminus, the 531-residue chain is Tryptophan 6-halogenase ThaL (531 aa).

FAD is bound by residues glycine 13, threonine 15, alanine 16, alanine 39, isoleucine 42, isoleucine 45, valine 47, and alanine 50. The active site involves lysine 79. L-tryptophan is bound at residue proline 111. FAD is bound by residues methionine 198 and leucine 349. 2 residues coordinate chloride: serine 360 and glycine 361. Residue isoleucine 362 coordinates FAD. Residues tyrosine 454, tyrosine 455, glutamate 461, and phenylalanine 465 each contribute to the L-tryptophan site.

It belongs to the flavin-dependent halogenase family. Bacterial tryptophan halogenase subfamily. In terms of assembly, homodimer. Monomer in solution.

The enzyme catalyses L-tryptophan + FADH2 + chloride + O2 = 6-chloro-L-tryptophan + FAD + 2 H2O. It catalyses the reaction D-tryptophan + FADH2 + chloride + O2 = 6-chloro-D-tryptophan + FAD + 2 H2O. Involved in the biosynthesis of thienodolin, a plant growth-regulating compound. Catalyzes the chlorination of tryptophan (Trp) at C6 position to yield 6-chloro-tryptophan. It is also able to use bromide ions to generate monobrominated Trp. In vitro, accepts a wide range of amides and peptides carrying either L- or D-Trp at the N-terminus. This is Tryptophan 6-halogenase ThaL from Streptomyces albogriseolus.